We begin with the raw amino-acid sequence, 416 residues long: MEFEKIKVINPVVEMDGDEMTRVIWKFIKDKLIFPFLELDIKYFDLGLPNRDFTDDKVTIETAEATLKYNVAIKCATITPDEARVREFGLKKMWRSPNGTIRNILNGTVFREPIICRNIPRLVPGWTKPICIGRHAFGDQYRATDLIVNEPGKLKLVFEPSGSSQKTEFEVFNFTGGGVALAMYNTDESIRAFAESSMYTAYQKKWPLYLSTKNTILKIYDGRFKDIFQEVYEANWRSKYEAAGIWYEHRLIDDMVAYAMKSEGGYVWACKNYDGDVQSDFLAQGYGSLGMMTSVLVCPDGKTIEAEAAHGTVTRHYRVHQKGGETSTNSIASIFAWSRGLAHRAKLDSNAALLSYTEKLEAACMGTVESGKMTKDLALLIHGAKVRRDQYVNTEEFIDAVAWELKRRLLGNNSRL.

Residues 77-79 and Arg-84 each bind NADP(+); that span reads TIT. Thr-79 is a substrate binding site. Substrate-binding positions include 96-102, Arg-111, and Arg-134; that span reads SPNGTIR. Asp-253 provides a ligand contact to Mn(2+). Lys-261 contacts NADP(+). Position 276 (Asp-276) interacts with Mn(2+). Residues 311–316 and Asn-329 contribute to the NADP(+) site; that span reads GTVTRH. The short motif at 414–416 is the Peroxisomal targeting signal element; the sequence is SRL.

This sequence belongs to the isocitrate and isopropylmalate dehydrogenases family. It depends on Mg(2+) as a cofactor. Mn(2+) serves as cofactor.

Its subcellular location is the peroxisome. The enzyme catalyses D-threo-isocitrate + NADP(+) = 2-oxoglutarate + CO2 + NADPH. May be involved in response to oxidative stresses. In Arabidopsis thaliana (Mouse-ear cress), this protein is Peroxisomal isocitrate dehydrogenase [NADP] (ICDH).